A 406-amino-acid polypeptide reads, in one-letter code: Sorting nexin-6 (406 aa).

Met-1 carries the post-translational modification N-acetylmethionine. An N-acetylmethionine; in Sorting nexin-6, N-terminally processed modification is found at Met-2. An interaction with PIM1 region spans residues 2–179 (MEGLDDGPDF…NQDLSVRGKN (178 aa)). Residues 26–173 (LQSDAALQVD…HVFLEYNQDL (148 aa)) form the PX domain. A 1,2-diacyl-sn-glycero-3-phospho-(1D-myo-inositol-4,5-bisphosphate) is bound by residues 41–47 (SERDKVK), 100–106 (FDASREK), and 114–117 (EGSM). 2 positions are modified to phosphoserine: Ser-116 and Ser-194. Positions 182 to 199 (EKLEDFFKNMVKSADGVI) are membrane-binding amphipathic helix. The BAR domain maps to 203–406 (VKDVDDFFEH…NCLAVLNGDT (204 aa)).

The protein belongs to the sorting nexin family. In terms of assembly, forms heterodimers with BAR domain-containing sorting nexins SNX1 and SNX2. The heterodimers are proposed to self-assemble into helical arrays on the membrane to stabilize and expand local membrane curvature underlying endosomal tubule formation. Thought to be a component of the originally described retromer complex (also called SNX-BAR retromer) which is a pentamer containing the heterotrimeric retromer cargo-selective complex (CSC), also described as vacuolar protein sorting subcomplex (VPS), and a heterodimeric membrane-deforming subcomplex formed between SNX1 or SNX2 and SNX5 or SNX6 (also called SNX-BAR subcomplex); the respective CSC and SNX-BAR subcomplexes associate with low affinity. Interacts with SNX1, SNX2, VPS26A, VPS29, VPS35, CDKN1B, TGFB receptors, BACE1, BRMS1, PIP5K1C isoform 3. Interacts with DCTN1; the association with DCTN1 is involved in movement of retromer-c ontaining vesicles toward the TGN. Interacts with CDKN1B and GIT1. Interacts with PIM1; translocating SNX6 to the nucleus. In terms of processing, in vitro phosphorylated by PIM1; not affecting PIM1-dependent nuclear translocation.

It localises to the early endosome. Its subcellular location is the early endosome membrane. It is found in the cytoplasmic vesicle. The protein localises to the cytoplasm. The protein resides in the nucleus. Involved in several stages of intracellular trafficking. Interacts with membranes phosphatidylinositol 3,4-bisphosphate and/or phosphatidylinositol 4,5-bisphosphate. Acts in part as component of the retromer membrane-deforming SNX-BAR subcomplex. The SNX-BAR retromer mediates retrograde transport of cargo proteins from endosomes to the trans-Golgi network (TGN) and is involved in endosome-to-plasma membrane transport for cargo protein recycling. The SNX-BAR subcomplex functions to deform the donor membrane into a tubular profile called endosome-to-TGN transport carrier (ETC). Does not have in vitro vesicle-to-membrane remodeling activity. Involved in retrograde endosome-to-TGN transport of lysosomal enzyme receptor IGF2R. May function as link between transport vesicles and dynactin. Negatively regulates retrograde transport of BACE1 from the cell surface to the trans-Golgi network. Involved in E-cadherin sorting and degradation; inhibits PIP5K1C isoform 3-mediated E-cadherin degradation. In association with GIT1 involved in EGFR degradation. Promotes lysosomal degradation of CDKN1B. May contribute to transcription regulation. This chain is Sorting nexin-6 (SNX6), found in Homo sapiens (Human).